A 184-amino-acid chain; its full sequence is Peptidyl-tRNA hydrolase (184 aa).

Position 14 (Y14) interacts with tRNA. Residue H19 is the Proton acceptor of the active site. The tRNA site is built by F60 and N62.

The protein belongs to the PTH family. Monomer.

The protein localises to the cytoplasm. The enzyme catalyses an N-acyl-L-alpha-aminoacyl-tRNA + H2O = an N-acyl-L-amino acid + a tRNA + H(+). In terms of biological role, hydrolyzes ribosome-free peptidyl-tRNAs (with 1 or more amino acids incorporated), which drop off the ribosome during protein synthesis, or as a result of ribosome stalling. Functionally, catalyzes the release of premature peptidyl moieties from peptidyl-tRNA molecules trapped in stalled 50S ribosomal subunits, and thus maintains levels of free tRNAs and 50S ribosomes. This chain is Peptidyl-tRNA hydrolase, found in Mesomycoplasma hyopneumoniae (strain 7448) (Mycoplasma hyopneumoniae).